The chain runs to 237 residues: Speedy protein E4 (237 aa).

Positions 1–61 (MASGQARPPF…KRKSEWSDES (61 aa)) are disordered.

Belongs to the Speedy/Ringo family. Predominantly expressed in testis.

This chain is Speedy protein E4, found in Homo sapiens (Human).